Reading from the N-terminus, the 562-residue chain is Glycine betaine/proline/choline/ectoine transporter VP1456 (562 aa).

12 consecutive transmembrane segments (helical) span residues 68–88 (PVFGISAGLVVFCLISLLLVE), 110–130 (FFMWSTNFFLLFAVGLLFSPL), 147–167 (VSWLSMLFAAGMGIGLLFWSV), 203–223 (WGVHGWSIYALVALALAFFAF), 243–263 (AWGWLGHVIDILAVLSTLFGL), 287–307 (GIGTQMVVIAFVTFIAVLSVV), 322–342 (MIVAFALLIFITFITFDTAMG), 373–393 (WTVFYWAWWVSWSPFVGMFIA), 404–424 (FLFAVIVIPTLVTLVWMSVFG), 456–476 (VLPYSSVISILSIVLILVFFI), 503–523 (IFWACIEGSIAAVMLWVGGKE), and 531–551 (GVVATGLPFTFVLLLMCVSLV).

The protein belongs to the BCCT transporter (TC 2.A.15) family.

It is found in the cell inner membrane. Its function is as follows. Involved in the uptake of osmoprotectants. Can transport glycine betaine, proline, choline and ectoine. This is Glycine betaine/proline/choline/ectoine transporter VP1456 from Vibrio parahaemolyticus serotype O3:K6 (strain RIMD 2210633).